A 301-amino-acid chain; its full sequence is ATP synthase gamma chain (301 aa).

It belongs to the ATPase gamma chain family. F-type ATPases have 2 components, CF(1) - the catalytic core - and CF(0) - the membrane proton channel. CF(1) has five subunits: alpha(3), beta(3), gamma(1), delta(1), epsilon(1). CF(0) has three main subunits: a, b and c.

The protein localises to the cell inner membrane. Its function is as follows. Produces ATP from ADP in the presence of a proton gradient across the membrane. The gamma chain is believed to be important in regulating ATPase activity and the flow of protons through the CF(0) complex. The protein is ATP synthase gamma chain of Helicobacter pylori (strain P12).